Here is a 208-residue protein sequence, read N- to C-terminus: 3-isopropylmalate dehydratase small subunit 2 (208 aa).

The protein belongs to the LeuD family. LeuD type 1 subfamily. As to quaternary structure, heterodimer of LeuC and LeuD.

It catalyses the reaction (2R,3S)-3-isopropylmalate = (2S)-2-isopropylmalate. The protein operates within amino-acid biosynthesis; L-leucine biosynthesis; L-leucine from 3-methyl-2-oxobutanoate: step 2/4. Catalyzes the isomerization between 2-isopropylmalate and 3-isopropylmalate, via the formation of 2-isopropylmaleate. The sequence is that of 3-isopropylmalate dehydratase small subunit 2 (leuD2) from Salmonella typhimurium (strain LT2 / SGSC1412 / ATCC 700720).